Consider the following 167-residue polypeptide: Crossover junction endodeoxyribonuclease RuvC (167 aa).

Active-site residues include Asp-11, Glu-71, and Asp-143. Mg(2+) contacts are provided by Asp-11, Glu-71, and Asp-143.

This sequence belongs to the RuvC family. In terms of assembly, homodimer which binds Holliday junction (HJ) DNA. The HJ becomes 2-fold symmetrical on binding to RuvC with unstacked arms; it has a different conformation from HJ DNA in complex with RuvA. In the full resolvosome a probable DNA-RuvA(4)-RuvB(12)-RuvC(2) complex forms which resolves the HJ. Mg(2+) serves as cofactor.

It localises to the cytoplasm. It carries out the reaction Endonucleolytic cleavage at a junction such as a reciprocal single-stranded crossover between two homologous DNA duplexes (Holliday junction).. Its function is as follows. The RuvA-RuvB-RuvC complex processes Holliday junction (HJ) DNA during genetic recombination and DNA repair. Endonuclease that resolves HJ intermediates. Cleaves cruciform DNA by making single-stranded nicks across the HJ at symmetrical positions within the homologous arms, yielding a 5'-phosphate and a 3'-hydroxyl group; requires a central core of homology in the junction. The consensus cleavage sequence is 5'-(A/T)TT(C/G)-3'. Cleavage occurs on the 3'-side of the TT dinucleotide at the point of strand exchange. HJ branch migration catalyzed by RuvA-RuvB allows RuvC to scan DNA until it finds its consensus sequence, where it cleaves and resolves the cruciform DNA. This Bartonella bacilliformis (strain ATCC 35685 / KC583 / Herrer 020/F12,63) protein is Crossover junction endodeoxyribonuclease RuvC.